A 264-amino-acid chain; its full sequence is Thiazole synthase (264 aa).

K106 acts as the Schiff-base intermediate with DXP in catalysis. 1-deoxy-D-xylulose 5-phosphate contacts are provided by residues G167, 193-194 (AG), and 215-216 (NS).

The protein belongs to the ThiG family. Homotetramer. Forms heterodimers with either ThiH or ThiS.

The protein localises to the cytoplasm. It carries out the reaction [ThiS sulfur-carrier protein]-C-terminal-Gly-aminoethanethioate + 2-iminoacetate + 1-deoxy-D-xylulose 5-phosphate = [ThiS sulfur-carrier protein]-C-terminal Gly-Gly + 2-[(2R,5Z)-2-carboxy-4-methylthiazol-5(2H)-ylidene]ethyl phosphate + 2 H2O + H(+). It participates in cofactor biosynthesis; thiamine diphosphate biosynthesis. In terms of biological role, catalyzes the rearrangement of 1-deoxy-D-xylulose 5-phosphate (DXP) to produce the thiazole phosphate moiety of thiamine. Sulfur is provided by the thiocarboxylate moiety of the carrier protein ThiS. In vitro, sulfur can be provided by H(2)S. This chain is Thiazole synthase, found in Prochlorococcus marinus (strain AS9601).